Here is a 301-residue protein sequence, read N- to C-terminus: Protoheme IX farnesyltransferase (301 aa).

9 helical membrane-spanning segments follow: residues 29–49 (VVAL…PGTV), 51–71 (LVPL…AAAF), 96–116 (ISII…FIIL), 123–143 (LTAW…TAYL), 151–171 (IVVG…AVTG), 177–197 (ALLL…ALAI), 223–243 (CIFL…LVGM), 244–264 (CGPV…YKAW), and 281–301 (FSIY…YLWV).

The protein belongs to the UbiA prenyltransferase family. Protoheme IX farnesyltransferase subfamily.

It is found in the cell inner membrane. It catalyses the reaction heme b + (2E,6E)-farnesyl diphosphate + H2O = Fe(II)-heme o + diphosphate. It functions in the pathway porphyrin-containing compound metabolism; heme O biosynthesis; heme O from protoheme: step 1/1. In terms of biological role, converts heme B (protoheme IX) to heme O by substitution of the vinyl group on carbon 2 of heme B porphyrin ring with a hydroxyethyl farnesyl side group. The sequence is that of Protoheme IX farnesyltransferase from Shewanella pealeana (strain ATCC 700345 / ANG-SQ1).